We begin with the raw amino-acid sequence, 372 residues long: 3-dehydroquinate synthase (372 aa).

Residues 116 to 120 (GVVGD), 140 to 141 (TT), K153, K162, and 180 to 183 (TLNT) each bind NAD(+). Zn(2+) contacts are provided by E195, H260, and H277.

The protein belongs to the sugar phosphate cyclases superfamily. Dehydroquinate synthase family. Co(2+) is required as a cofactor. The cofactor is Zn(2+). Requires NAD(+) as cofactor.

It localises to the cytoplasm. The enzyme catalyses 7-phospho-2-dehydro-3-deoxy-D-arabino-heptonate = 3-dehydroquinate + phosphate. The protein operates within metabolic intermediate biosynthesis; chorismate biosynthesis; chorismate from D-erythrose 4-phosphate and phosphoenolpyruvate: step 2/7. Catalyzes the conversion of 3-deoxy-D-arabino-heptulosonate 7-phosphate (DAHP) to dehydroquinate (DHQ). The chain is 3-dehydroquinate synthase from Prochlorococcus marinus (strain MIT 9303).